We begin with the raw amino-acid sequence, 525 residues long: Acetyl-CoA hydrolase (525 aa).

Position 280–284 (280–284) interacts with CoA; the sequence is GIGNI. Catalysis depends on Glu-305, which acts as the 5-glutamyl coenzyme A thioester intermediate. Residues Asn-395 and Gly-399 each coordinate CoA.

It belongs to the acetyl-CoA hydrolase/transferase family.

Its subcellular location is the cytoplasm. It carries out the reaction acetyl-CoA + H2O = acetate + CoA + H(+). In terms of biological role, required for utilization of acetate. The polypeptide is Acetyl-CoA hydrolase (acu-8) (Neurospora crassa (strain ATCC 24698 / 74-OR23-1A / CBS 708.71 / DSM 1257 / FGSC 987)).